Reading from the N-terminus, the 208-residue chain is Protein GrpE (208 aa).

Residues 1-12 (MTNKDESVEKNT) are compositionally biased toward basic and acidic residues. The tract at residues 1-51 (MTNKDESVEKNTESTVEETNVKQNIDDSVEQAEESKGHLQDEAIEETSDEN) is disordered. Residues 13–23 (ESTVEETNVKQ) are compositionally biased toward polar residues. Residues 42 to 51 (EAIEETSDEN) show a composition bias toward acidic residues.

It belongs to the GrpE family. Homodimer.

The protein resides in the cytoplasm. In terms of biological role, participates actively in the response to hyperosmotic and heat shock by preventing the aggregation of stress-denatured proteins, in association with DnaK and GrpE. It is the nucleotide exchange factor for DnaK and may function as a thermosensor. Unfolded proteins bind initially to DnaJ; upon interaction with the DnaJ-bound protein, DnaK hydrolyzes its bound ATP, resulting in the formation of a stable complex. GrpE releases ADP from DnaK; ATP binding to DnaK triggers the release of the substrate protein, thus completing the reaction cycle. Several rounds of ATP-dependent interactions between DnaJ, DnaK and GrpE are required for fully efficient folding. This is Protein GrpE from Staphylococcus aureus (strain USA300).